A 119-amino-acid chain; its full sequence is Fluoride-specific ion channel FluC 2 (119 aa).

2 helical membrane passes run Met1–Ser21 and Gly44–Leu64. Residues Gly70 and Thr73 each contribute to the Na(+) site. The chain crosses the membrane as a helical span at residues Leu98–Leu118.

This sequence belongs to the fluoride channel Fluc/FEX (TC 1.A.43) family.

It localises to the cell membrane. It catalyses the reaction fluoride(in) = fluoride(out). With respect to regulation, na(+) is not transported, but it plays an essential structural role and its presence is essential for fluoride channel function. Its function is as follows. Fluoride-specific ion channel. Important for reducing fluoride concentration in the cell, thus reducing its toxicity. This Lactobacillus delbrueckii subsp. bulgaricus (strain ATCC 11842 / DSM 20081 / BCRC 10696 / JCM 1002 / NBRC 13953 / NCIMB 11778 / NCTC 12712 / WDCM 00102 / Lb 14) protein is Fluoride-specific ion channel FluC 2.